We begin with the raw amino-acid sequence, 290 residues long: uncharacterized protein (290 aa).

Residues 7 to 21 (AVFGLGVMGSPMAQN) and Thr-100 each bind NAD(+). Residue Lys-175 is part of the active site. Residue Lys-243 participates in NAD(+) binding.

This sequence belongs to the HIBADH-related family.

This is an uncharacterized protein from Synechocystis sp. (strain ATCC 27184 / PCC 6803 / Kazusa).